We begin with the raw amino-acid sequence, 37 residues long: Mu-agatoxin-Aa1e (37 aa).

Disulfide bonds link C2/C18, C9/C23, C17/C33, and C25/C31. N37 bears the Asparagine amide mark.

Belongs to the neurotoxin 07 (Beta/delta-agtx) family. 03 (aga-4) subfamily. Aga sub-subfamily. In terms of tissue distribution, expressed by the venom gland.

Its subcellular location is the secreted. Its function is as follows. Insecticidal neurotoxin that induces an irreversible spastic paralysis when injected into insects. Modifies presynaptic voltage-gated sodium channels (Nav), causing them to open at the normal resting potential of the nerve. This leads to spontaneous release of neurotransmitter and repetitive action potentials in motor neurons. The polypeptide is Mu-agatoxin-Aa1e (Agelenopsis aperta (North American funnel-web spider)).